The sequence spans 450 residues: MGKYFGTDGVRGEANVELTPELAFKLGRFGGYVLSQHESEVPKVFVGRDTRISGEMLESALIAGLLSVGIHVYKLGVIATPGVAYLVKSEKASAGVMISASHNPALDNGIKFFGGDGYKLDDDRELEIEALLDATEDTLPRPSAEGLGTLVDYPEGLRKYQQYLVSTGLELEGMHVALDTANGAASTSARQIFADLGAQLTVIGENPDGLNINLNVGSTHPEALQEVVRESGAAIGLAFDGDSDRLIAVDENGELVDGDKIMYIIGKYLSEKGQLAQNTIVTTVMSNLGFHKALDREGIQKAVTAVGDRYVVEEMRQSGYNLGGEQSGHVIIMDYNTTGDGQLTAVQLTKIMKETGKKLSELASEVTIYPQKLVNIRVENSMKDKAMEVPAIKSIIEEMEAKMAGNGRILVRPSGTEPLLRVMAEAPSHEEVDFYVDTIADVVRAEIGIE.

Residue Ser-101 is the Phosphoserine intermediate of the active site. Ser-101, Asp-240, Asp-242, and Asp-244 together coordinate Mg(2+). Residue Ser-101 is modified to Phosphoserine.

The protein belongs to the phosphohexose mutase family. The cofactor is Mg(2+). Activated by phosphorylation.

It carries out the reaction alpha-D-glucosamine 1-phosphate = D-glucosamine 6-phosphate. In terms of biological role, catalyzes the conversion of glucosamine-6-phosphate to glucosamine-1-phosphate. This chain is Phosphoglucosamine mutase, found in Streptococcus gordonii (strain Challis / ATCC 35105 / BCRC 15272 / CH1 / DL1 / V288).